The following is a 449-amino-acid chain: Exodeoxyribonuclease 7 large subunit (449 aa).

Belongs to the XseA family. As to quaternary structure, heterooligomer composed of large and small subunits.

Its subcellular location is the cytoplasm. It carries out the reaction Exonucleolytic cleavage in either 5'- to 3'- or 3'- to 5'-direction to yield nucleoside 5'-phosphates.. In terms of biological role, bidirectionally degrades single-stranded DNA into large acid-insoluble oligonucleotides, which are then degraded further into small acid-soluble oligonucleotides. The polypeptide is Exodeoxyribonuclease 7 large subunit (Salmonella agona (strain SL483)).